A 73-amino-acid chain; its full sequence is Putative membrane protein insertion efficiency factor (73 aa).

The protein belongs to the UPF0161 family.

Its subcellular location is the cell inner membrane. Its function is as follows. Could be involved in insertion of integral membrane proteins into the membrane. This is Putative membrane protein insertion efficiency factor from Rickettsia bellii (strain OSU 85-389).